Reading from the N-terminus, the 224-residue chain is UPF0758 protein VV1_0825 (224 aa).

The interval 1-20 (MSLKNLPSESMPREKLLQRG) is disordered. One can recognise an MPN domain in the interval 102 to 224 (ALTSPQHTKL…VVSFAERGWI (123 aa)). Zn(2+) contacts are provided by H173, H175, and D186. The JAMM motif motif lies at 173–186 (HNHPSGVAEPSQAD).

It belongs to the UPF0758 family.

In Vibrio vulnificus (strain CMCP6), this protein is UPF0758 protein VV1_0825.